The primary structure comprises 344 residues: Uroporphyrinogen decarboxylase (344 aa).

Substrate-binding positions include 23–27 (RQAGR), Asp-73, Tyr-149, Thr-204, and His-321.

It belongs to the uroporphyrinogen decarboxylase family. Homodimer.

It localises to the cytoplasm. The enzyme catalyses uroporphyrinogen III + 4 H(+) = coproporphyrinogen III + 4 CO2. It participates in porphyrin-containing compound metabolism; protoporphyrin-IX biosynthesis; coproporphyrinogen-III from 5-aminolevulinate: step 4/4. In terms of biological role, catalyzes the decarboxylation of four acetate groups of uroporphyrinogen-III to yield coproporphyrinogen-III. The protein is Uroporphyrinogen decarboxylase of Francisella tularensis subsp. holarctica (strain LVS).